Reading from the N-terminus, the 352-residue chain is Molybdenum import ATP-binding protein ModC (352 aa).

Residues 1 to 229 enclose the ABC transporter domain; the sequence is MLQLDFHQQL…SALRPWLPKD (229 aa). 31 to 38 is an ATP binding site; the sequence is GVSGAGKT. Residues 289-352 enclose the Mop domain; that stretch reads KSSIRNVLRA…AQIKSVSITA (64 aa).

Belongs to the ABC transporter superfamily. Molybdate importer (TC 3.A.1.8) family. The complex is composed of two ATP-binding proteins (ModC), two transmembrane proteins (ModB) and a solute-binding protein (ModA).

It is found in the cell inner membrane. The catalysed reaction is molybdate(out) + ATP + H2O = molybdate(in) + ADP + phosphate + H(+). Its function is as follows. Part of the ABC transporter complex ModABC involved in molybdenum import. Responsible for energy coupling to the transport system. This Pectobacterium atrosepticum (strain SCRI 1043 / ATCC BAA-672) (Erwinia carotovora subsp. atroseptica) protein is Molybdenum import ATP-binding protein ModC.